A 388-amino-acid polypeptide reads, in one-letter code: Succinate--CoA ligase [ADP-forming] subunit beta (388 aa).

Positions 9 to 244 (KQLFAEFGLP…PSQEDEREAH (236 aa)) constitute an ATP-grasp domain. ATP-binding positions include Lys-46, 53 to 55 (GRG), Glu-99, Ser-102, and Glu-107. Mg(2+) contacts are provided by Asn-199 and Asp-213. Residues Asn-264 and 321-323 (GIV) contribute to the substrate site.

Belongs to the succinate/malate CoA ligase beta subunit family. Heterotetramer of two alpha and two beta subunits. The cofactor is Mg(2+).

It carries out the reaction succinate + ATP + CoA = succinyl-CoA + ADP + phosphate. The catalysed reaction is GTP + succinate + CoA = succinyl-CoA + GDP + phosphate. It participates in carbohydrate metabolism; tricarboxylic acid cycle; succinate from succinyl-CoA (ligase route): step 1/1. Functionally, succinyl-CoA synthetase functions in the citric acid cycle (TCA), coupling the hydrolysis of succinyl-CoA to the synthesis of either ATP or GTP and thus represents the only step of substrate-level phosphorylation in the TCA. The beta subunit provides nucleotide specificity of the enzyme and binds the substrate succinate, while the binding sites for coenzyme A and phosphate are found in the alpha subunit. This chain is Succinate--CoA ligase [ADP-forming] subunit beta, found in Vibrio campbellii (strain ATCC BAA-1116).